Here is a 171-residue protein sequence, read N- to C-terminus: ATP synthase subunit b (171 aa).

Residues 2 to 22 (VLVKMALGFLILLSPLCAMEL) traverse the membrane as a helical segment.

Belongs to the ATPase B chain family. In terms of assembly, F-type ATPases have 2 components, F(1) - the catalytic core - and F(0) - the membrane proton channel. F(1) has five subunits: alpha(3), beta(3), gamma(1), delta(1), epsilon(1). F(0) has three main subunits: a(1), b(2) and c(10-14). The alpha and beta chains form an alternating ring which encloses part of the gamma chain. F(1) is attached to F(0) by a central stalk formed by the gamma and epsilon chains, while a peripheral stalk is formed by the delta and b chains.

Its subcellular location is the cell inner membrane. In terms of biological role, f(1)F(0) ATP synthase produces ATP from ADP in the presence of a proton or sodium gradient. F-type ATPases consist of two structural domains, F(1) containing the extramembraneous catalytic core and F(0) containing the membrane proton channel, linked together by a central stalk and a peripheral stalk. During catalysis, ATP synthesis in the catalytic domain of F(1) is coupled via a rotary mechanism of the central stalk subunits to proton translocation. Its function is as follows. Component of the F(0) channel, it forms part of the peripheral stalk, linking F(1) to F(0). In Helicobacter acinonychis (strain Sheeba), this protein is ATP synthase subunit b.